The following is an 89-amino-acid chain: Small ribosomal subunit protein uS15 (89 aa).

It belongs to the universal ribosomal protein uS15 family. As to quaternary structure, part of the 30S ribosomal subunit. Forms a bridge to the 50S subunit in the 70S ribosome, contacting the 23S rRNA.

Functionally, one of the primary rRNA binding proteins, it binds directly to 16S rRNA where it helps nucleate assembly of the platform of the 30S subunit by binding and bridging several RNA helices of the 16S rRNA. Forms an intersubunit bridge (bridge B4) with the 23S rRNA of the 50S subunit in the ribosome. In Bacillus anthracis (strain CDC 684 / NRRL 3495), this protein is Small ribosomal subunit protein uS15.